An 839-amino-acid chain; its full sequence is Lon protease (839 aa).

The 194-residue stretch at 31 to 224 (LFLIPIKSRP…KVLLFLKKEI (194 aa)) folds into the Lon N-terminal domain. 377-384 (GPPGVGKT) contributes to the ATP binding site. The Lon proteolytic domain maps to 613–790 (ASVPGTALGL…EEVALLLFDE (178 aa)). Residues Ser696 and Lys739 contribute to the active site. The interval 807 to 839 (IVNPTRKLSPKKKTTQKQKLSLSKQKGNNQKKK) is disordered. A compositionally biased stretch (low complexity) spans 823 to 832 (KQKLSLSKQK).

The protein belongs to the peptidase S16 family. In terms of assembly, homohexamer. Organized in a ring with a central cavity.

The protein localises to the cytoplasm. It carries out the reaction Hydrolysis of proteins in presence of ATP.. In terms of biological role, ATP-dependent serine protease that mediates the selective degradation of mutant and abnormal proteins as well as certain short-lived regulatory proteins. Required for cellular homeostasis and for survival from DNA damage and developmental changes induced by stress. Degrades polypeptides processively to yield small peptide fragments that are 5 to 10 amino acids long. Binds to DNA in a double-stranded, site-specific manner. The sequence is that of Lon protease from Leptospira interrogans serogroup Icterohaemorrhagiae serovar copenhageni (strain Fiocruz L1-130).